Here is an 851-residue protein sequence, read N- to C-terminus: Phosphatidylinositol 4-kinase pik1 (851 aa).

Residues 1 to 123 (MPSSNSGNEL…KICKRLYNRI (123 aa)) form the PIK helical domain. A phosphoserine mark is found at S202, S219, S222, and S235. Y236 bears the Phosphotyrosine mark. A disordered region spans residues 384–404 (LQDSTDNDISESESEGGDLSM). Residues 388–399 (TDNDISESESEG) show a composition bias toward acidic residues. A PI3K/PI4K catalytic domain is found at 558-836 (YAKKERIRKS…LIQKANCSVW (279 aa)). The tract at residues 564–570 (IRKSSPY) is G-loop. Positions 706 to 714 (QLKDRHNGN) are catalytic loop. The segment at 725-749 (HIDFGFLLTNTPGNVGFESAPFKLT) is activation loop.

It belongs to the PI3/PI4-kinase family. Interacts with cdc4 and cam2.

It is found in the golgi apparatus. The protein localises to the nucleus. It catalyses the reaction a 1,2-diacyl-sn-glycero-3-phospho-(1D-myo-inositol) + ATP = a 1,2-diacyl-sn-glycero-3-phospho-(1D-myo-inositol 4-phosphate) + ADP + H(+). Acts on phosphatidylinositol (PI) in the first committed step in the production of the second messenger inositol 1,4,5,-trisphosphate. PIK1 is part of a nuclear phosphoinositide cycle and could control cytokinesis through the actin cytoskeleton. The protein is Phosphatidylinositol 4-kinase pik1 (pik1) of Schizosaccharomyces pombe (strain 972 / ATCC 24843) (Fission yeast).